The following is a 1478-amino-acid chain: DNA-directed RNA polymerase subunit beta' (1478 aa).

The Mg(2+) site is built by Asp-535, Asp-537, and Asp-539. Positions 1034, 1109, 1116, and 1119 each coordinate Zn(2+).

This sequence belongs to the RNA polymerase beta' chain family. As to quaternary structure, the RNAP catalytic core consists of 2 alpha, 1 beta, 1 beta' and 1 omega subunit. When a sigma factor is associated with the core the holoenzyme is formed, which can initiate transcription. The cofactor is Mg(2+). Zn(2+) serves as cofactor.

It carries out the reaction RNA(n) + a ribonucleoside 5'-triphosphate = RNA(n+1) + diphosphate. Functionally, DNA-dependent RNA polymerase catalyzes the transcription of DNA into RNA using the four ribonucleoside triphosphates as substrates. In Mycoplasmopsis agalactiae (strain NCTC 10123 / CIP 59.7 / PG2) (Mycoplasma agalactiae), this protein is DNA-directed RNA polymerase subunit beta'.